Consider the following 702-residue polypeptide: Polyphosphate kinase (702 aa).

Position 55 (Asn55) interacts with ATP. Mg(2+)-binding residues include Arg389 and Arg419. Catalysis depends on His449, which acts as the Phosphohistidine intermediate. Tyr482, Arg578, and His606 together coordinate ATP.

This sequence belongs to the polyphosphate kinase 1 (PPK1) family. The cofactor is Mg(2+). Post-translationally, an intermediate of this reaction is the autophosphorylated ppk in which a phosphate is covalently linked to a histidine residue through a N-P bond.

The enzyme catalyses [phosphate](n) + ATP = [phosphate](n+1) + ADP. Its function is as follows. Catalyzes the reversible transfer of the terminal phosphate of ATP to form a long-chain polyphosphate (polyP). The chain is Polyphosphate kinase from Bacillus anthracis.